Consider the following 476-residue polypeptide: Adenosylhomocysteinase (476 aa).

Thr-67, Asp-142, and Glu-202 together coordinate substrate. Residue 203-205 (TTT) coordinates NAD(+). Substrate-binding residues include Lys-232 and Asp-236. NAD(+)-binding positions include Asn-237, 266 to 271 (GYGDVG), Glu-289, Asn-324, 345 to 347 (IGH), and Asn-390.

This sequence belongs to the adenosylhomocysteinase family. The cofactor is NAD(+).

The protein localises to the cytoplasm. The catalysed reaction is S-adenosyl-L-homocysteine + H2O = L-homocysteine + adenosine. It participates in amino-acid biosynthesis; L-homocysteine biosynthesis; L-homocysteine from S-adenosyl-L-homocysteine: step 1/1. Its function is as follows. May play a key role in the regulation of the intracellular concentration of adenosylhomocysteine. This Prochlorococcus marinus (strain MIT 9303) protein is Adenosylhomocysteinase.